The chain runs to 437 residues: MFGFGRLSAEGKVGIASGVVFFSMLISRTLISERVDKGTRALLFRVQFLLFINSLLLLGSLYLWKRVVKRLCGARAAPSVPQRCWRIIVLLFLALVHGSYLCMFFLVDTEPHWLSLLSFSCLGVYVILLFFLFVFGCLNRLGKLLSRSRSAEEAVASGSFRQTVLALIITAVLAVYGLVNAAQPPKVVDVEIPVEKLPESLNGLRLVLLSDIHLGPTVGRSKLQRIVSMVNELNPDVVVIVGDLTDSQVSRLRSAAEPLGQMKPRLGSYFATGNHDYYTADVEGWFELLHSMGIEALHNSHAKVFRPERTEDWICLAGIDDLEARMLRYPGHGMDVEKALNGCTTEGPIILLAHQPHAAKQALQQRPDISLVLSGHTHAGQLFPLTILAFLMNPFFCGLYRVSEHTMVYVTPGTGYYGIPMRIASRSEITNIVLKQA.

5 helical membrane-spanning segments follow: residues 7–27 (LSAE…MLIS), 41–61 (ALLF…LGSL), 87–107 (IIVL…FFLV), 116–136 (LLSF…FVFG), and 164–184 (VLAL…AAQP). Positions 211, 213, 243, 274, 376, and 378 each coordinate a divalent metal cation.

The protein belongs to the metallophosphoesterase superfamily. LOC643853 family. Requires a divalent metal cation as cofactor.

Its subcellular location is the membrane. This is Transmembrane protein with metallophosphoesterase domain (tmppe) from Danio rerio (Zebrafish).